Reading from the N-terminus, the 300-residue chain is Small ribosomal subunit biogenesis GTPase RsgA (300 aa).

Residues 69 to 231 (RSDEMRVKQF…LIDSPGFQAF (163 aa)) enclose the CP-type G domain. Residues 119–122 (NKID) and 172–180 (GQSGMGKST) each bind GTP. C255, C260, H262, and C268 together coordinate Zn(2+).

Belongs to the TRAFAC class YlqF/YawG GTPase family. RsgA subfamily. As to quaternary structure, monomer. Associates with 30S ribosomal subunit, binds 16S rRNA. It depends on Zn(2+) as a cofactor.

It localises to the cytoplasm. In terms of biological role, one of several proteins that assist in the late maturation steps of the functional core of the 30S ribosomal subunit. Helps release RbfA from mature subunits. May play a role in the assembly of ribosomal proteins into the subunit. Circularly permuted GTPase that catalyzes slow GTP hydrolysis, GTPase activity is stimulated by the 30S ribosomal subunit. This is Small ribosomal subunit biogenesis GTPase RsgA from Bordetella bronchiseptica (strain ATCC BAA-588 / NCTC 13252 / RB50) (Alcaligenes bronchisepticus).